We begin with the raw amino-acid sequence, 430 residues long: Protein arginine methyltransferase NDUFAF7, mitochondrial (430 aa).

Residues 1-31 (MSGLARLRKTAFLMVSASANCRIQRYQSSRT) constitute a mitochondrion transit peptide.

It belongs to the NDUFAF7 family.

The protein resides in the mitochondrion. It carries out the reaction L-arginyl-[protein] + 2 S-adenosyl-L-methionine = N(omega),N(omega)'-dimethyl-L-arginyl-[protein] + 2 S-adenosyl-L-homocysteine + 2 H(+). Arginine methyltransferase involved in the assembly or stability of mitochondrial NADH:ubiquinone oxidoreductase complex (complex I). Acts by mediating symmetric dimethylation of 'Arg-118' of ndufs2 after it assembles into the complex I, stabilizing the early intermediate complex. The protein is Protein arginine methyltransferase NDUFAF7, mitochondrial of Xenopus tropicalis (Western clawed frog).